The chain runs to 259 residues: UPF0246 protein PST_1170 (259 aa).

The protein belongs to the UPF0246 family.

This Stutzerimonas stutzeri (strain A1501) (Pseudomonas stutzeri) protein is UPF0246 protein PST_1170.